The following is a 426-amino-acid chain: MTFVEDFLSSYTFSYNPRNLETLLLGLGIKDTEGAKRAIRLGSDPKYFQVYMMYNDKAKLITRIMQFNADKYGMKLTFQNGLSVKLSPKVLAESVDDFFDMLDQWFIVSVEKDEIGVLVKSVKPVKPKTDVDIDEDFLKKVEAEVPLYIFLIASFGYKIPDKTTYNVYRDYILGRFIHLFRPSSNIPLHIAELSNRGTGKTTTFLIMRDFLGYYYTTEPPTLPFLVYDSKTKQQGIVATKNGIIFDEVQDWSGDRVKAILSVLDTGMENCTWNRSVSGSSETINRCIPIVFLGNENYISIDFYQAPSNLQQYIAEKSSMLEEVLLNKYPDIFPTKAFLDRFARIAVGNNFPSFTETITGKVLFPTILRKLIRELQKRIDRESPLNNDYEGRTRRRVEDVGQVLKGLGVDLDKPELVYAWTRFVGVQ.

This is an uncharacterized protein from Acidianus filamentous virus 1 (isolate United States/Yellowstone) (AFV-1).